The sequence spans 263 residues: tRNA (guanine-N(7)-)-methyltransferase (263 aa).

The segment covering 1 to 10 (MLPQDPSTEP) has biased composition (polar residues). The interval 1-38 (MLPQDPSTEPTPADDAAPVDSAGQASAPSPADPEGVAH) is disordered. S-adenosyl-L-methionine contacts are provided by E91, E116, D143, and D166. Residue D166 is part of the active site. K170 provides a ligand contact to substrate. The interval 172-177 (RHNKRR) is interaction with RNA. Residues D202 and 240 to 243 (TKFE) contribute to the substrate site.

The protein belongs to the class I-like SAM-binding methyltransferase superfamily. TrmB family.

The catalysed reaction is guanosine(46) in tRNA + S-adenosyl-L-methionine = N(7)-methylguanosine(46) in tRNA + S-adenosyl-L-homocysteine. It participates in tRNA modification; N(7)-methylguanine-tRNA biosynthesis. Catalyzes the formation of N(7)-methylguanine at position 46 (m7G46) in tRNA. The protein is tRNA (guanine-N(7)-)-methyltransferase of Cupriavidus necator (strain ATCC 17699 / DSM 428 / KCTC 22496 / NCIMB 10442 / H16 / Stanier 337) (Ralstonia eutropha).